We begin with the raw amino-acid sequence, 1156 residues long: Chromosome partition protein Smc (1156 aa).

37–44 serves as a coordination point for ATP; it reads PNGAGKSN. A coiled-coil region spans residues 167-499; it reads SGIGEYERKK…AIEREVRSFS (333 aa). Residues 509 to 624 form the SMC hinge domain; the sequence is KGVYGSVSEL…VENFESAKAI (116 aa). A coiled-coil region spans residues 654–1001; the sequence is GELNKRYYEE…EETENKKRKV (348 aa).

Belongs to the SMC family. In terms of assembly, homodimer.

The protein localises to the cytoplasm. Required for chromosome condensation and partitioning. This Aquifex aeolicus (strain VF5) protein is Chromosome partition protein Smc.